A 109-amino-acid polypeptide reads, in one-letter code: Large ribosomal subunit protein uL24 (109 aa).

The segment at 85 to 109 is disordered; sequence KYGTDPKTNKKVRLSRKTNNLVGGQ.

It belongs to the universal ribosomal protein uL24 family. Part of the 50S ribosomal subunit.

One of two assembly initiator proteins, it binds directly to the 5'-end of the 23S rRNA, where it nucleates assembly of the 50S subunit. In terms of biological role, one of the proteins that surrounds the polypeptide exit tunnel on the outside of the subunit. This Mycoplasmoides gallisepticum (strain R(low / passage 15 / clone 2)) (Mycoplasma gallisepticum) protein is Large ribosomal subunit protein uL24.